The primary structure comprises 242 residues: Lysosomal membrane ascorbate-dependent ferrireductase CYB561A3 (242 aa).

Topologically, residues 1 to 4 (MASG) are cytoplasmic. A helical transmembrane segment spans residues 5–25 (WFYLSCMVLGSLGSMCILFTA). The region spanning 12-219 (VLGSLGSMCI…FGLLVLYVLL (208 aa)) is the Cytochrome b561 domain. At 26 to 40 (YWMQYWRGGFAWDGT) the chain is on the lumenal side. The helical transmembrane segment at 41–61 (VLMFNWHPVLMVAGMVVLYGA) threads the bilayer. Residues H47 and R67 each contribute to the heme b site. Residues 62 to 81 (ASLVYRLPSSWVGPRLPWKV) lie on the Cytoplasmic side of the membrane. Residues R76 and K80 each coordinate L-ascorbate. Residues 82–102 (LHAALHLLAFTCTVVGLIAVF) form a helical membrane-spanning segment. Residues H83, 112–115 (HLYS), and H117 each bind heme b. The Lumenal segment spans residues 103–119 (RFHNHSRIAHLYSLHSW). Residues 120-140 (LGITTVVLFACQWFLGFAVFL) form a helical membrane-spanning segment. At 141-154 (LPWASQWLRSLLKP) the chain is on the cytoplasmic side. R149 is a binding site for L-ascorbate. The helical transmembrane segment at 155-175 (LHVFFGACILSLSITSVISGI) threads the bilayer. Residues H156 and E177 each coordinate heme b. Residues 176–202 (NEKLFFVLKNATKPYSSLPGEAVFANS) are Lumenal-facing. Residues 203–223 (TGLLVVAFGLLVLYVLLASSW) form a helical membrane-spanning segment. K224 provides a ligand contact to heme b. The Cytoplasmic segment spans residues 224-242 (KRPDPGALTDRQPLLHDRE).

In terms of assembly, homodimer. Heme b is required as a cofactor. Post-translationally, N-glycosylated. In terms of tissue distribution, present in lung, spleen, thymus and testis. Present at low level in brain, heart, liver and kidney. Expressed in the alveolar macrophages of the lung, in the white pulp of the spleen, widespread in the thymus, and in the Sertoli cells of the testis (at protein level).

Its subcellular location is the late endosome membrane. It is found in the lysosome membrane. It carries out the reaction Fe(3+)(out) + L-ascorbate(in) = monodehydro-L-ascorbate radical(in) + Fe(2+)(out) + H(+). Its function is as follows. Transmembrane reductase that uses ascorbate as an electron donor in the cytoplasm and transfers electrons across membranes to reduce iron cations Fe(3+) into Fe(2+) in the lumen of the late endosome and lysosome. Reduced iron can then be extruded from the late endosome and lysosome to the cytoplasm by divalent metal-specific transporters. It is therefore most probably involved in endosomal and lysosomal cellular iron homeostasis. This Mus musculus (Mouse) protein is Lysosomal membrane ascorbate-dependent ferrireductase CYB561A3.